Here is a 525-residue protein sequence, read N- to C-terminus: Sodium-dependent lysophosphatidylcholine symporter 1 (525 aa).

Residues 1-29 (MEKESENASCAGLLGQKNEPGSPTQSRSG) are disordered. The Cytoplasmic portion of the chain corresponds to 1 to 32 (MEKESENASCAGLLGQKNEPGSPTQSRSGKHK). A helical membrane pass occupies residues 33–62 (LSVCSKICFAIGGAPYQITGCALGFFLQIF). At 63–73 (LLDIAQVPPFY) the chain is on the extracellular side. Residues 74–94 (ASIILFSGRVWDAITDPLVGF) form a helical membrane-spanning segment. Topologically, residues 95-106 (FVSKSSWTRLGR) are cytoplasmic. The helical transmembrane segment at 107–126 (LLPWVVFSTPFAVVSYLLIW) threads the bilayer. Residues 127–137 (FVPGFSGVSMV) are Extracellular-facing. A helical transmembrane segment spans residues 138–162 (IWYLVFYCLFQTLVTCFHVPYSALT). At 163–169 (MFISKEQ) the chain is on the cytoplasmic side. A helical membrane pass occupies residues 170-201 (SDRDSATGYRMTVEVLGTVLGTAIQGQIVGRE). Over 202–226 (NTPCVEHIRETHLYNTSVIMEDLNI) the chain is Extracellular. Cysteines 205 and 458 form a disulfide. Residues Asn-216 and Asn-225 are each glycosylated (N-linked (GlcNAc...) asparagine). A helical transmembrane segment spans residues 227–260 (THDVESLSSTRDAYMIAAGVICAIYVLCAIILTL). The Cytoplasmic segment spans residues 261–291 (GVREKRDAYELLSDQPFSFWQGLKLVMSHKP). Residues 292–318 (YIKLITGFLFTSLAFMLLEGNFALFLT) form a helical membrane-spanning segment. Topologically, residues 319 to 329 (YTMGFRRDFQN) are extracellular. Residues 330-348 (ILLVVMLSATLTVPFWQWF) traverse the membrane as a helical segment. Residues 349 to 352 (LTRF) are Cytoplasmic-facing. A helical transmembrane segment spans residues 353–374 (GKKTAVYFGISSVIPFLILVVL). The Extracellular segment spans residues 375–377 (MES). A helical transmembrane segment spans residues 378–414 (NLILAYVVAVAAGLSVAAAFLLPWSMLPDVIDDFILK). Topologically, residues 415–424 (NPDSHGHEPI) are cytoplasmic. The helical transmembrane segment at 425–451 (FFSFYVFFTKFASGVSLGISTLSLDFA) threads the bilayer. The Extracellular segment spans residues 452–463 (GYQTRACSQPEQ). The chain crosses the membrane as a helical span at residues 464–487 (VNLTLKMLICVAPVILILLGLLLF). The Cytoplasmic portion of the chain corresponds to 488-525 (ILYPINEEKRKQNKKALQLIRESNRDSDSDSLELASNV).

It belongs to the major facilitator superfamily.

Its subcellular location is the cell membrane. The protein localises to the endoplasmic reticulum membrane. The catalysed reaction is a 1-acyl-sn-glycero-3-phosphocholine(in) + Na(+)(in) = a 1-acyl-sn-glycero-3-phosphocholine(out) + Na(+)(out). It catalyses the reaction 1-(4Z,7Z,10Z,13Z,16Z,19Z-docosahexaenoyl)-sn-glycero-3-phosphocholine(in) + Na(+)(in) = 1-(4Z,7Z,10Z,13Z,16Z,19Z-docosahexaenoyl)-sn-glycero-3-phosphocholine(out) + Na(+)(out). The enzyme catalyses 1-(9Z-octadecenoyl)-sn-glycero-3-phosphocholine(in) + Na(+)(in) = 1-(9Z-octadecenoyl)-sn-glycero-3-phosphocholine(out) + Na(+)(out). It carries out the reaction 1-hexadecanoyl-sn-glycero-3-phosphocholine(in) + Na(+)(in) = 1-hexadecanoyl-sn-glycero-3-phosphocholine(out) + Na(+)(out). The catalysed reaction is a 1-acyl-sn-glycero-3-phosphoethanolamine(in) + Na(+)(in) = a 1-acyl-sn-glycero-3-phosphoethanolamine(out) + Na(+)(out). Its function is as follows. Sodium-dependent lysophosphatidylcholine (LPC) symporter, which plays an essential role for blood-brain barrier formation and function. Specifically expressed in endothelium of the blood-brain barrier of micro-vessels and transports LPC into the brain. Transport of LPC is essential because it constitutes the major mechanism by which docosahexaenoic acid (DHA), an omega-3 fatty acid that is essential for normal brain growth and cognitive function, enters the brain. Transports LPC carrying long-chain fatty acids such LPC oleate and LPC palmitate with a minimum acyl chain length of 14 carbons. Does not transport docosahexaenoic acid in unesterified fatty acid. The chain is Sodium-dependent lysophosphatidylcholine symporter 1 (mfsd2a) from Xenopus tropicalis (Western clawed frog).